Consider the following 92-residue polypeptide: MRCSHNWDDPPPLFGAVSYGMQEGAGRGVRREARDTPCRGTAEGLATSQPEDGETRAALQRIDHLDTQLLQLERDLAHYLEMAELPDPFSEN.

Residues Ala-25 to Gly-53 form a disordered region.

This is an uncharacterized protein from Treponema pallidum (strain Nichols).